The following is a 500-amino-acid chain: 2-isopropylmalate synthase (500 aa).

A Pyruvate carboxyltransferase domain is found at 5–266; sequence LFIFDTTLRD…ITNITTNKIY (262 aa). Mn(2+) is bound by residues aspartate 14, histidine 202, histidine 204, and asparagine 238. The regulatory domain stretch occupies residues 389 to 500; it reads KLEYLQVTSG…VDAINKFIVD (112 aa).

This sequence belongs to the alpha-IPM synthase/homocitrate synthase family. LeuA type 1 subfamily. As to quaternary structure, homodimer. It depends on Mn(2+) as a cofactor.

The protein localises to the cytoplasm. The catalysed reaction is 3-methyl-2-oxobutanoate + acetyl-CoA + H2O = (2S)-2-isopropylmalate + CoA + H(+). It participates in amino-acid biosynthesis; L-leucine biosynthesis; L-leucine from 3-methyl-2-oxobutanoate: step 1/4. Its function is as follows. Catalyzes the condensation of the acetyl group of acetyl-CoA with 3-methyl-2-oxobutanoate (2-ketoisovalerate) to form 3-carboxy-3-hydroxy-4-methylpentanoate (2-isopropylmalate). This Parabacteroides distasonis (strain ATCC 8503 / DSM 20701 / CIP 104284 / JCM 5825 / NCTC 11152) protein is 2-isopropylmalate synthase.